Reading from the N-terminus, the 173-residue chain is Protein PLASTID REDOX INSENSITIVE 2, chloroplastic (173 aa).

The N-terminal 55 residues, 1 to 55, are a transit peptide targeting the chloroplast; it reads MATRAWVAAAVALNPQLLPLRSCSPTKSVSPAQRSASMGLRLRSGRPCLGKFVCR.

It is found in the plastid. It localises to the chloroplast stroma. The protein localises to the chloroplast nucleoid. Required for the activity of the plastid-encoded RNA polymerase (PEP) and full expression of genes transcribed by PEP. The polypeptide is Protein PLASTID REDOX INSENSITIVE 2, chloroplastic (Zea mays (Maize)).